The sequence spans 63 residues: MVFQLICSTCGRDISEERFALLIKKIALKTVLKGVKNSCCRLKLSTQIEPQRNLTVEPLLDIN.

Belongs to the poxviridae DNA-directed RNA polymerase 7 kDa subunit family. In terms of assembly, the DNA-dependent RNA polymerase used for intermediate and late genes expression consists of eight subunits 147 kDa, 133 kDa, 35 kDa, 30 kDa, 22 kDa, 19 kDa, 18 kDa and 7 kDa totalling more than 500 kDa in mass. The same holoenzyme, with the addition of the transcription-specificity factor RAP94, is used for early gene expression.

It localises to the virion. It catalyses the reaction RNA(n) + a ribonucleoside 5'-triphosphate = RNA(n+1) + diphosphate. Part of the DNA-dependent RNA polymerase which catalyzes the transcription of viral DNA into RNA using the four ribonucleoside triphosphates as substrates. Responsible for the transcription of early, intermediate and late genes. DNA-dependent RNA polymerase associates with the early transcription factor (ETF) thereby allowing the early genes transcription. Late transcription, and probably also intermediate transcription, require newly synthesized RNA polymerase. The sequence is that of DNA-directed RNA polymerase 7 kDa subunit (RPO7) from Rabbit fibroma virus (strain Kasza) (RFV).